A 625-amino-acid polypeptide reads, in one-letter code: Probable potassium transport system protein Kup (625 aa).

12 helical membrane passes run 13-33 (TALAALGVVFGDIGTSPLYAL), 53-73 (ILSIIFWCLMLIISIKYVAIV), 103-123 (IYMIAIGFIGASLFFGDGIIT), 141-161 (VFDPFIMPIAIAIIVTLFLVQ), 172-192 (FGPITLVWFLSLGILGIHSVI), 206-226 (AIQFIYHHPIMTFFVMGAVVL), 250-270 (WFFVVLPCLVLNYAGQGALLL), 282-302 (LLVPQWALYPMIIMATMATVI), 340-360 (IYVPFLNWLLLIAIIILILIF), 369-389 (AYGLAVTLTMLCDTILVAVFI), 400-420 (VLLLIIPFFILESVLVGATSL), and 422-442 (ILSGGWVPLLIGAIAVTILMT).

It belongs to the HAK/KUP transporter (TC 2.A.72) family.

It is found in the cell inner membrane. It catalyses the reaction K(+)(in) + H(+)(in) = K(+)(out) + H(+)(out). Transport of potassium into the cell. Likely operates as a K(+):H(+) symporter. The polypeptide is Probable potassium transport system protein Kup (Acinetobacter baumannii (strain AYE)).